Here is a 544-residue protein sequence, read N- to C-terminus: Chaperonin GroEL (544 aa).

ATP-binding positions include Thr30–Pro33, Lys51, Asp87–Thr91, Gly415, and Asp495.

The protein belongs to the chaperonin (HSP60) family. In terms of assembly, forms a cylinder of 14 subunits composed of two heptameric rings stacked back-to-back. Interacts with the co-chaperonin GroES.

It is found in the cytoplasm. It carries out the reaction ATP + H2O + a folded polypeptide = ADP + phosphate + an unfolded polypeptide.. In terms of biological role, together with its co-chaperonin GroES, plays an essential role in assisting protein folding. The GroEL-GroES system forms a nano-cage that allows encapsulation of the non-native substrate proteins and provides a physical environment optimized to promote and accelerate protein folding. The chain is Chaperonin GroEL from Neisseria meningitidis serogroup B (strain ATCC BAA-335 / MC58).